The following is a 378-amino-acid chain: uncharacterized protein (378 aa).

Low complexity predominate over residues 150 to 176 (TTTATTSNNRFNNNNSNNNNINNNNDN). Positions 150–187 (TTTATTSNNRFNNNNSNNNNINNNNDNNNKEQKKESRC) are disordered. Residues 177 to 187 (NNKEQKKESRC) show a composition bias toward basic and acidic residues.

This is an uncharacterized protein from Dictyostelium discoideum (Social amoeba).